A 760-amino-acid polypeptide reads, in one-letter code: Xaa-Pro dipeptidyl-peptidase (760 aa).

Residues S349, D469, and H499 each act as charge relay system in the active site.

The protein belongs to the peptidase S15 family. Homodimer.

It is found in the cytoplasm. The catalysed reaction is Hydrolyzes Xaa-Pro-|- bonds to release unblocked, N-terminal dipeptides from substrates including Ala-Pro-|-p-nitroanilide and (sequentially) Tyr-Pro-|-Phe-Pro-|-Gly-Pro-|-Ile.. In terms of biological role, removes N-terminal dipeptides sequentially from polypeptides having unsubstituted N-termini provided that the penultimate residue is proline. The polypeptide is Xaa-Pro dipeptidyl-peptidase (Streptococcus pyogenes serotype M49 (strain NZ131)).